The following is a 139-amino-acid chain: Ribulose bisphosphate carboxylase small subunit (139 aa).

The protein belongs to the RuBisCO small chain family. Heterohexadecamer of 8 large and 8 small subunits.

It localises to the plastid. Its subcellular location is the chloroplast. Functionally, ruBisCO catalyzes two reactions: the carboxylation of D-ribulose 1,5-bisphosphate, the primary event in carbon dioxide fixation, as well as the oxidative fragmentation of the pentose substrate in the photorespiration process. Both reactions occur simultaneously and in competition at the same active site. Although the small subunit is not catalytic it is essential for maximal activity. This Ectocarpus siliculosus (Brown alga) protein is Ribulose bisphosphate carboxylase small subunit.